The chain runs to 101 residues: Small ribosomal subunit protein bS18c (101 aa).

Belongs to the bacterial ribosomal protein bS18 family. As to quaternary structure, part of the 30S ribosomal subunit.

It localises to the plastid. It is found in the chloroplast. This chain is Small ribosomal subunit protein bS18c, found in Vitis vinifera (Grape).